The sequence spans 135 residues: Transcription antitermination protein NusB (135 aa).

It belongs to the NusB family.

Its function is as follows. Involved in transcription antitermination. Required for transcription of ribosomal RNA (rRNA) genes. Binds specifically to the boxA antiterminator sequence of the ribosomal RNA (rrn) operons. The chain is Transcription antitermination protein NusB from Bdellovibrio bacteriovorus (strain ATCC 15356 / DSM 50701 / NCIMB 9529 / HD100).